We begin with the raw amino-acid sequence, 276 residues long: Hemin import ATP-binding protein HmuV (276 aa).

An ABC transporter domain is found at 2–259 (LTAHHLDVAR…AHIAQCYGFA (258 aa)). 34-41 (GRNGAGKS) provides a ligand contact to ATP.

This sequence belongs to the ABC transporter superfamily. Heme (hemin) importer (TC 3.A.1.14.5) family. The complex is composed of two ATP-binding proteins (HmuV), two transmembrane proteins (HmuU) and a solute-binding protein (HmuT).

The protein localises to the cell inner membrane. Functionally, part of the ABC transporter complex HmuTUV involved in hemin import. Responsible for energy coupling to the transport system. This chain is Hemin import ATP-binding protein HmuV, found in Burkholderia cenocepacia (strain HI2424).